The sequence spans 391 residues: ATP-sensitive inward rectifier potassium channel 1 (391 aa).

Over 1 to 77 (MNASSRNVFD…IWTTVLDLKW (77 aa)) the chain is Cytoplasmic. A Phosphoserine; by SGK1 modification is found at serine 44. Residues 78-102 (RYKMTIFITAFLGSWFFFGLLWYAV) form a helical membrane-spanning segment. The Extracellular segment spans residues 103 to 127 (AYIHKDLPEFHPSANHTPCVENING). An N-linked (GlcNAc...) asparagine glycan is attached at asparagine 117. Positions 128-139 (LTSAFLFSLETQ) form an intramembrane region, helical; Pore-forming. Residues 140 to 146 (VTIGYGF) constitute an intramembrane region (pore-forming). Residues 141–146 (TIGYGF) carry the Selectivity filter motif. Over 147–155 (RCVTEQCAT) the chain is Extracellular. The chain crosses the membrane as a helical span at residues 156 to 177 (AIFLLIFQSILGVIINSFMCGA). The Cytoplasmic portion of the chain corresponds to 178–391 (ILAKISRPKK…EVNETDDTKM (214 aa)). Positions 180–207 (AKISRPKKRAKTITFSKNAVISKRGGKL) are polyphosphoinositide (PIP2)-binding. 223-230 (GSHIYGKL) contributes to the ATP binding site.

It belongs to the inward rectifier-type potassium channel (TC 1.A.2.1) family. KCNJ1 subfamily. Interacts with SGK1 and SLC9A3R2/NHERF2. In terms of processing, phosphorylation at Ser-44 by SGK1 is necessary for its expression at the cell membrane. In terms of tissue distribution, in the kidney and pancreatic islets. Lower levels in skeletal muscle, pancreas, spleen, brain, heart and liver.

The protein localises to the cell membrane. It carries out the reaction K(+)(in) = K(+)(out). Its activity is regulated as follows. Inhibited by WNK3. Activated by phosphatidylinositol 4,5 biphosphate (PtdIns(4,5)P2). Functionally, inward rectifier potassium channels are characterized by a greater tendency to allow potassium to flow into the cell rather than out of it. Their voltage dependence is regulated by the concentration of extracellular potassium; as external potassium is raised, the voltage range of the channel opening shifts to more positive voltages. The inward rectification is mainly due to the blockage of outward current by internal magnesium. This channel is activated by internal ATP and can be blocked by external barium. In the kidney, probably plays a major role in potassium homeostasis. In Homo sapiens (Human), this protein is ATP-sensitive inward rectifier potassium channel 1 (KCNJ1).